The chain runs to 333 residues: Glycerol-3-phosphate dehydrogenase [NAD(P)+] (333 aa).

Positions 13, 33, and 108 each coordinate NADPH. Lys-108 and Gly-138 together coordinate sn-glycerol 3-phosphate. Ser-142 contacts NADPH. 5 residues coordinate sn-glycerol 3-phosphate: Lys-193, Asp-246, Ser-256, Arg-257, and Asn-258. Lys-193 acts as the Proton acceptor in catalysis. Arg-257 contacts NADPH. NADPH contacts are provided by Val-281 and Glu-283.

The protein belongs to the NAD-dependent glycerol-3-phosphate dehydrogenase family.

The protein resides in the cytoplasm. It carries out the reaction sn-glycerol 3-phosphate + NAD(+) = dihydroxyacetone phosphate + NADH + H(+). The catalysed reaction is sn-glycerol 3-phosphate + NADP(+) = dihydroxyacetone phosphate + NADPH + H(+). Its pathway is membrane lipid metabolism; glycerophospholipid metabolism. In terms of biological role, catalyzes the reduction of the glycolytic intermediate dihydroxyacetone phosphate (DHAP) to sn-glycerol 3-phosphate (G3P), the key precursor for phospholipid synthesis. The sequence is that of Glycerol-3-phosphate dehydrogenase [NAD(P)+] from Bifidobacterium longum (strain DJO10A).